Consider the following 81-residue polypeptide: Dermaseptin-S6 (81 aa).

An N-terminal signal peptide occupies residues 1 to 22; sequence MDILKKSLFFILFLGLVSLSIS. Residues 22 to 49 form a disordered region; it reads SEEEKRENEDEEDQEDDEQSEEKRGLWS. Positions 23–45 are excised as a propeptide; that stretch reads EEEKRENEDEEDQEDDEQSEEKR. Acidic residues predominate over residues 30–41; it reads EDEEDQEDDEQS. Isoleucine amide is present on Ile78. A propeptide spanning residues 80–81 is cleaved from the precursor; it reads EQ.

Belongs to the frog skin active peptide (FSAP) family. Dermaseptin subfamily. Expressed by the skin glands.

Its subcellular location is the secreted. Functionally, antimicrobial peptide. The chain is Dermaseptin-S6 from Phyllomedusa sauvagei (Sauvage's leaf frog).